The sequence spans 943 residues: TBC1 domain family member 2B (943 aa).

Residues 1–29 (MPGVEDPCDSQGTPPEEPSTSVAPGEAAK) are disordered. The segment covering 10–22 (SQGTPPEEPSTSV) has biased composition (polar residues). One can recognise a PH domain in the interval 32-129 (SPRLCGYLAK…WLQELQQKRW (98 aa)). Positions 315–514 (RMESDVLLKL…ARYSNLEAKM (200 aa)) form a coiled coil. Residues 642–836 (GIPHEHRSRM…RIWDSLLYEG (195 aa)) enclose the Rab-GAP TBC domain.

The protein localises to the early endosome. Its function is as follows. GTPase-activating protein that plays a role in the early steps of endocytosis. The polypeptide is TBC1 domain family member 2B (tbc1d2b) (Xenopus tropicalis (Western clawed frog)).